We begin with the raw amino-acid sequence, 177 residues long: Ribulose bisphosphate carboxylase small subunit, chloroplastic 4 (177 aa).

A chloroplast-targeting transit peptide spans 1 to 56 (MASSMMASTAAAVARAGPAQTNMVPFNACRSSVPFPATRKANNDLSTLPSNGGRVS).

Belongs to the RuBisCO small chain family. In terms of assembly, heterohexadecamer of 8 large and 8 small subunits.

The protein localises to the plastid. The protein resides in the chloroplast. RuBisCO catalyzes two reactions: the carboxylation of D-ribulose 1,5-bisphosphate, the primary event in carbon dioxide fixation, as well as the oxidative fragmentation of the pentose substrate. Both reactions occur simultaneously and in competition at the same active site. Although the small subunit is not catalytic it is essential for maximal activity. This chain is Ribulose bisphosphate carboxylase small subunit, chloroplastic 4, found in Lemna gibba (Swollen duckweed).